The sequence spans 106 residues: Gibberellin-regulated protein 12 (106 aa).

The signal sequence occupies residues 1 to 22 (MMKLIVVFVISSLLFATQFSNG).

The protein belongs to the GASA family. Six disulfide bonds may be present.

It is found in the secreted. Gibberellin-regulated protein that may function in hormonal controlled steps of development such as seed germination, flowering and seed maturation. The chain is Gibberellin-regulated protein 12 (GASA12) from Arabidopsis thaliana (Mouse-ear cress).